Reading from the N-terminus, the 100-residue chain is Integration host factor subunit alpha (100 aa).

It belongs to the bacterial histone-like protein family. In terms of assembly, heterodimer of an alpha and a beta chain.

This protein is one of the two subunits of integration host factor, a specific DNA-binding protein that functions in genetic recombination as well as in transcriptional and translational control. The sequence is that of Integration host factor subunit alpha from Alcanivorax borkumensis (strain ATCC 700651 / DSM 11573 / NCIMB 13689 / SK2).